We begin with the raw amino-acid sequence, 637 residues long: GTPase-activating protein GYP1 (637 aa).

Positions 1–17 (MGVRSAAKEMHERDHNS) are enriched in basic and acidic residues. 2 disordered regions span residues 1 to 152 (MGVR…GDRY) and 187 to 233 (RTLS…NDSK). A compositionally biased stretch (polar residues) spans 18 to 27 (DSSSLVTSLM). Over residues 28 to 45 (KSWRISSASSSKKPSLYK) the composition is skewed to low complexity. The span at 46–59 (MNTTESTSLPSGYA) shows a compositional bias: polar residues. S69 is subject to Phosphoserine. 2 stretches are compositionally biased toward polar residues: residues 79 to 91 (QQASTRRTSNSYS) and 98 to 107 (PTLSTASNES). The span at 115–127 (RQHHQRHHHHQQP) shows a compositional bias: basic residues. Composition is skewed to low complexity over residues 128–142 (RHSSSGSVGNNCSNS) and 187–207 (RTLSRKSTSSSINSISNMGTS). A compositionally biased stretch (polar residues) spans 208 to 223 (AVRNSSSSFTYPQLPQ). At S250 the chain carries Phosphoserine. The Rab-GAP TBC domain maps to 280-508 (GIPKIHRPVV…RMWDTYLSET (229 aa)). Positions 543–564 (DFQSPTTALSNMTPNNAVEDSG) are disordered.

The protein resides in the golgi apparatus. Its subcellular location is the golgi stack. Functionally, GTPase-activating protein (GAP) that stimulates specifically the intrinsic GTPase activity of Ypt/Rab-type GTPases YPT1 and YPT7. Functions on the Golgi as a negative regulator of YPT1. Functions on the vacuole as a negative regulator of YPT7. It is also active on SEC4 and YPT51. Provides a catalytic arginine (arginine finger) and glutamine (glutamine finger) in trans to accelerate the GTP hydrolysis rate of the substrate GTPase. This chain is GTPase-activating protein GYP1 (GYP1), found in Saccharomyces cerevisiae (strain ATCC 204508 / S288c) (Baker's yeast).